The chain runs to 326 residues: Glycolipid sulfotransferase MRA_1383 (326 aa).

Residue 40–45 participates in 3'-phosphoadenylyl sulfate binding; the sequence is KSGLTW. Catalysis depends on His97, which acts as the Proton acceptor. Residue 116-124 coordinates 3'-phosphoadenylyl sulfate; the sequence is RDPRDAAVS.

Belongs to the sulfotransferase 1 family.

In terms of biological role, involved in the synthesis of cell wall sulfolipids. This is Glycolipid sulfotransferase MRA_1383 from Mycobacterium tuberculosis (strain ATCC 25177 / H37Ra).